A 125-amino-acid chain; its full sequence is uncharacterized protein (125 aa).

The tract at residues 1–21 is disordered; it reads MLFYHCSSFSSSSSSSSSSAS. The span at 7–21 shows a compositional bias: low complexity; it reads SSFSSSSSSSSSSAS.

This is an uncharacterized protein from Saccharomyces cerevisiae (strain ATCC 204508 / S288c) (Baker's yeast).